Here is a 138-residue protein sequence, read N- to C-terminus: Protein FAM136A (138 aa).

Ala2 is subject to N-acetylalanine. A phosphothreonine mark is found at Thr124 and Thr126.

It belongs to the FAM136 family.

The protein is Protein FAM136A (Fam136a) of Mus musculus (Mouse).